We begin with the raw amino-acid sequence, 203 residues long: FMN-dependent NADH:quinone oxidoreductase 1 (203 aa).

FMN is bound by residues S9, 15-17 (SAS), 95-98 (MYNF), and 139-142 (TAGG).

This sequence belongs to the azoreductase type 1 family. As to quaternary structure, homodimer. Requires FMN as cofactor.

It catalyses the reaction 2 a quinone + NADH + H(+) = 2 a 1,4-benzosemiquinone + NAD(+). It carries out the reaction N,N-dimethyl-1,4-phenylenediamine + anthranilate + 2 NAD(+) = 2-(4-dimethylaminophenyl)diazenylbenzoate + 2 NADH + 2 H(+). In terms of biological role, quinone reductase that provides resistance to thiol-specific stress caused by electrophilic quinones. Its function is as follows. Also exhibits azoreductase activity. Catalyzes the reductive cleavage of the azo bond in aromatic azo compounds to the corresponding amines. This Pseudomonas putida (strain ATCC 47054 / DSM 6125 / CFBP 8728 / NCIMB 11950 / KT2440) protein is FMN-dependent NADH:quinone oxidoreductase 1.